Here is a 193-residue protein sequence, read N- to C-terminus: Interferon lambda-3 (193 aa).

The N-terminal stretch at 1–19 is a signal peptide; sequence MLLLLLPLLLAAVLTRTQA. 3 cysteine pairs are disulfide-bonded: Cys-35-Cys-132, Cys-69-Cys-166, and Cys-185-Cys-192.

Belongs to the lambda interferon family.

Its subcellular location is the secreted. Cytokine with antiviral, antitumour and immunomodulatory activities. Plays a critical role in the antiviral host defense, predominantly in the epithelial tissues. Acts as a ligand for the heterodimeric class II cytokine receptor composed of IL10RB and IFNLR1, and receptor engagement leads to the activation of the JAK/STAT signaling pathway resulting in the expression of IFN-stimulated genes (ISG), which mediate the antiviral state. Has a restricted receptor distribution and therefore restricted targets: is primarily active in epithelial cells and this cell type-selective action is because of the epithelial cell-specific expression of its receptor IFNLR1. Seems not to be essential for early virus-activated host defense in vaginal infection, but plays an important role in Toll-like receptor (TLR)-induced antiviral defense. Plays a significant role in the antiviral immune defense in the intestinal epithelium. Exerts an immunomodulatory effect by up-regulating MHC class I antigen expression. In Mus musculus (Mouse), this protein is Interferon lambda-3 (Ifnl3).